Consider the following 1102-residue polypeptide: WASH complex subunit 4 (1102 aa).

This sequence belongs to the SWIP family. In terms of assembly, component of the WASH complex.

It localises to the early endosome. Functionally, acts at least in part as component of the WASH complex which may regulate wash nucleation-promoting factor (NPF) activity and is required for its membrane targeting during endosomal sorting. During embryogenesis, not involved in the wash-dependent developmental migration of hemocytes anteriorly from the tail. In Drosophila melanogaster (Fruit fly), this protein is WASH complex subunit 4.